The primary structure comprises 265 residues: 3-methyl-2-oxobutanoate hydroxymethyltransferase (265 aa).

D45 and D84 together coordinate Mg(2+). Residues 45-46 (DS), D84, and K112 contribute to the 3-methyl-2-oxobutanoate site. E114 is a Mg(2+) binding site. E181 serves as the catalytic Proton acceptor.

It belongs to the PanB family. In terms of assembly, homodecamer; pentamer of dimers. It depends on Mg(2+) as a cofactor.

It localises to the cytoplasm. The catalysed reaction is 3-methyl-2-oxobutanoate + (6R)-5,10-methylene-5,6,7,8-tetrahydrofolate + H2O = 2-dehydropantoate + (6S)-5,6,7,8-tetrahydrofolate. It functions in the pathway cofactor biosynthesis; (R)-pantothenate biosynthesis; (R)-pantoate from 3-methyl-2-oxobutanoate: step 1/2. In terms of biological role, catalyzes the reversible reaction in which hydroxymethyl group from 5,10-methylenetetrahydrofolate is transferred onto alpha-ketoisovalerate to form ketopantoate. This chain is 3-methyl-2-oxobutanoate hydroxymethyltransferase, found in Yersinia pestis bv. Antiqua (strain Antiqua).